The primary structure comprises 892 residues: Alanine--tRNA ligase (892 aa).

4 residues coordinate Zn(2+): His578, His582, Cys681, and His685.

This sequence belongs to the class-II aminoacyl-tRNA synthetase family. Zn(2+) is required as a cofactor.

It is found in the cytoplasm. The enzyme catalyses tRNA(Ala) + L-alanine + ATP = L-alanyl-tRNA(Ala) + AMP + diphosphate. Functionally, catalyzes the attachment of alanine to tRNA(Ala) in a two-step reaction: alanine is first activated by ATP to form Ala-AMP and then transferred to the acceptor end of tRNA(Ala). Also edits incorrectly charged Ser-tRNA(Ala) and Gly-tRNA(Ala) via its editing domain. The protein is Alanine--tRNA ligase of Cutibacterium acnes (strain DSM 16379 / KPA171202) (Propionibacterium acnes).